Consider the following 109-residue polypeptide: Nucleoid-associated protein ETA_24730 (109 aa).

It belongs to the YbaB/EbfC family. Homodimer.

It localises to the cytoplasm. The protein resides in the nucleoid. Functionally, binds to DNA and alters its conformation. May be involved in regulation of gene expression, nucleoid organization and DNA protection. In Erwinia tasmaniensis (strain DSM 17950 / CFBP 7177 / CIP 109463 / NCPPB 4357 / Et1/99), this protein is Nucleoid-associated protein ETA_24730.